The following is a 339-amino-acid chain: MNISNKKIILHDMCLRDGMHAKRHQISLAEMTQLATALDDAGVPLIEVTHGDGLGGNSVNYGFAAHSDEEYLSTVIPLMKQAKISALLLPGIGTVDHLRMAHELGVSTIRVAAQCTEADVTEQHISLSRQLGLDTVGFLMMAHMLEPKALLEQAKLMESYGANCIYCTDSAGYMLQDDVFERISVLRDGLKPDTQIGFHGHHNLALGVANSLTAVEAGAERIDGSAAGLGAGAGNTPLEVFNAVATRMGASTDVDVFKLMAAAEEIVVPMMDQAIRVDRDSLVLGYAGVYSSFLLHAKRAAEKYGVPSEAILLKLGQMKTVGGQEDMIEDVAINLAKSR.

The Pyruvate carboxyltransferase domain maps to 8 to 260; sequence IILHDMCLRD…STDVDVFKLM (253 aa). 16–17 contributes to the substrate binding site; that stretch reads RD. A Mn(2+)-binding site is contributed by Asp17. The Proton acceptor role is filled by His20. Residues Ser170 and His199 each coordinate substrate. Residues His199 and His201 each coordinate Mn(2+). Tyr290 is a substrate binding site.

The protein belongs to the 4-hydroxy-2-oxovalerate aldolase family.

It carries out the reaction (S)-4-hydroxy-2-oxopentanoate = acetaldehyde + pyruvate. The chain is 4-hydroxy-2-oxovalerate aldolase from Shewanella woodyi (strain ATCC 51908 / MS32).